A 237-amino-acid chain; its full sequence is UPF0502 protein HEAR1280 (237 aa).

The span at 1–13 (MNTEVMHSTSTES) shows a compositional bias: polar residues. The tract at residues 1–21 (MNTEVMHSTSTESDAQEKPQA) is disordered.

This sequence belongs to the UPF0502 family.

In Herminiimonas arsenicoxydans, this protein is UPF0502 protein HEAR1280.